The primary structure comprises 538 residues: Phosphoenolpyruvate carboxykinase (ATP) (538 aa).

Arg-64, Tyr-205, and Lys-211 together coordinate substrate. ATP contacts are provided by residues Lys-211, His-230, and 246–254 (GLSGTGKTT). Lys-211 and His-230 together coordinate Mn(2+). A Mn(2+)-binding site is contributed by Asp-267. Residues Glu-295, Arg-331, 447 to 448 (RI), and Thr-453 each bind ATP. Arg-331 is a substrate binding site.

This sequence belongs to the phosphoenolpyruvate carboxykinase (ATP) family. In terms of assembly, monomer. It depends on Mn(2+) as a cofactor.

It is found in the cytoplasm. The catalysed reaction is oxaloacetate + ATP = phosphoenolpyruvate + ADP + CO2. It functions in the pathway carbohydrate biosynthesis; gluconeogenesis. Involved in the gluconeogenesis. Catalyzes the conversion of oxaloacetate (OAA) to phosphoenolpyruvate (PEP) through direct phosphoryl transfer between the nucleoside triphosphate and OAA. The polypeptide is Phosphoenolpyruvate carboxykinase (ATP) (Haemophilus influenzae (strain 86-028NP)).